A 329-amino-acid polypeptide reads, in one-letter code: Putative oligopeptide transport ATP-binding protein YkfD (329 aa).

The 246-residue stretch at 7–252 (LEVSQLKMHF…PLHPYTKALL (246 aa)) folds into the ABC transporter domain. 44–51 (GESGCGKS) is an ATP binding site.

This sequence belongs to the ABC transporter superfamily.

This is Putative oligopeptide transport ATP-binding protein YkfD (ykfD) from Bacillus subtilis (strain 168).